Here is a 362-residue protein sequence, read N- to C-terminus: Phospho-N-acetylmuramoyl-pentapeptide-transferase (362 aa).

A run of 10 helical transmembrane segments spans residues 28 to 48 (AACM…IRWL), 72 to 92 (GTPT…TLLW), 100 to 120 (VWAV…DDYL), 134 to 154 (VKLI…MSLT), 170 to 190 (VLIP…MGAS), 201 to 221 (GLAI…AYLV), 241 to 261 (LTVF…FNAP), 265 to 285 (VFMG…VAIA), 290 to 310 (IVLA…IVQV), and 339 to 359 (TIVI…LATL).

This sequence belongs to the glycosyltransferase 4 family. MraY subfamily. It depends on Mg(2+) as a cofactor.

It localises to the cell inner membrane. It carries out the reaction UDP-N-acetyl-alpha-D-muramoyl-L-alanyl-gamma-D-glutamyl-meso-2,6-diaminopimeloyl-D-alanyl-D-alanine + di-trans,octa-cis-undecaprenyl phosphate = di-trans,octa-cis-undecaprenyl diphospho-N-acetyl-alpha-D-muramoyl-L-alanyl-D-glutamyl-meso-2,6-diaminopimeloyl-D-alanyl-D-alanine + UMP. Its pathway is cell wall biogenesis; peptidoglycan biosynthesis. Functionally, catalyzes the initial step of the lipid cycle reactions in the biosynthesis of the cell wall peptidoglycan: transfers peptidoglycan precursor phospho-MurNAc-pentapeptide from UDP-MurNAc-pentapeptide onto the lipid carrier undecaprenyl phosphate, yielding undecaprenyl-pyrophosphoryl-MurNAc-pentapeptide, known as lipid I. This chain is Phospho-N-acetylmuramoyl-pentapeptide-transferase, found in Granulibacter bethesdensis (strain ATCC BAA-1260 / CGDNIH1).